Reading from the N-terminus, the 475-residue chain is Ribulose bisphosphate carboxylase large chain (475 aa).

A propeptide spanning residues 1–2 (MA) is cleaved from the precursor. P3 bears the N-acetylproline mark. K14 bears the N6,N6,N6-trimethyllysine mark. 2 residues coordinate substrate: N123 and T173. The active-site Proton acceptor is K175. Substrate is bound at residue K177. Mg(2+) is bound by residues K201, D203, and E204. K201 carries the post-translational modification N6-carboxylysine. H294 functions as the Proton acceptor in the catalytic mechanism. 3 residues coordinate substrate: R295, H327, and S379.

The protein belongs to the RuBisCO large chain family. Type I subfamily. Heterohexadecamer of 8 large chains and 8 small chains; disulfide-linked. The disulfide link is formed within the large subunit homodimers. Requires Mg(2+) as cofactor. Post-translationally, the disulfide bond which can form in the large chain dimeric partners within the hexadecamer appears to be associated with oxidative stress and protein turnover.

The protein resides in the plastid. It is found in the chloroplast. The enzyme catalyses 2 (2R)-3-phosphoglycerate + 2 H(+) = D-ribulose 1,5-bisphosphate + CO2 + H2O. It carries out the reaction D-ribulose 1,5-bisphosphate + O2 = 2-phosphoglycolate + (2R)-3-phosphoglycerate + 2 H(+). Functionally, ruBisCO catalyzes two reactions: the carboxylation of D-ribulose 1,5-bisphosphate, the primary event in carbon dioxide fixation, as well as the oxidative fragmentation of the pentose substrate in the photorespiration process. Both reactions occur simultaneously and in competition at the same active site. This chain is Ribulose bisphosphate carboxylase large chain, found in Tupiella akineta (Green alga).